The following is a 979-amino-acid chain: MASTTVAQLAAELSRSPAALLEQLQAAGVGKATPDDVITESDKTRLLDYLKRSHGQSDDSARKKITLTKRETSEIRQSDSTGKTRTVQVEVRKKRVLIKRDDVESHGDGADSQESAEAAAEEVRRDEEQRREQAEALARQEAEAQAAREAAEREEAERRAKQEALEAEQRRQAELLAQKAAEEAAAAQAAADAAEETAREKAEEDKARLATERAQAQKNADDAKAAVDKARAEQDSAKAAADKARAEQDAAARRRREAAEAEARAIQQMLNAPPRVLKAPSERKAEEKKAEQTGTLHKPVKPAGATTEAKKDDKKAAPAATTTTAAAGDKKGAKGGKTGTWQDEGSRGKKGGGLKTRGDSSGGVGGWRSGPRGRGGKHNADDARSNFQAPTEPVVREVHVPETVSVADLAHKMAVKASEVIKQMMKLGQMVTINQVLDQETAMIVVEEMGHKAFAAKLDDPEALLVVDGEDHGDAEMLPRPPVVTVMGHVDHGKTSLLDYIRRTKVAAGEAGGITQHIGAYHVETDRGVITFLDTPGHEAFTAMRARGAKATDIVILVVAADDGVMPQTKEAIAHAKAAGVPIVVAITKVDKPEANPDRVKQELVAEQVVPEEYGGESPFVPVSAKTGQGIDDLLENVLLQAEVLELRAPVDAPAKGLVVEAQLDKGKGPIATILVSSGTLKRGDVVLAGSAYGRVRAMLDENGKPSKEAGPSIPVEIQGLSEVPAAGEEVLVLPDERKAREIALFRQGKFRDVKLAKQQAAKLETMLEQMAEGEVQTLPLIVKADVQGSQEALVQSLQKLSTSEVRVQIVHGGVGGISESDVNLATASKAVIIGFNVRADAGARKLAEHNGIDIRYYNIIYDAVDEIKAAMSGMLAPEKRETTIGQVEVRQVFRVPKVGAVAGCMVTDGLIKRNSMVRVLRNNVVIHDGELDSLKRFKDDVKEVKQGFECGLSIKNFNDVQEGDQLEVYEITEVARTL.

The segment covering Leu50–Gln77 has biased composition (basic and acidic residues). The tract at residues Leu50–Ser385 is disordered. A compositionally biased stretch (polar residues) spans Ser78 to Val87. 3 stretches are compositionally biased toward basic and acidic residues: residues Ile98–Gly109, Glu121–Ala142, and Glu149–Ala173. Over residues Glu174–Asp192 the composition is skewed to low complexity. 3 stretches are compositionally biased toward basic and acidic residues: residues Glu196–Thr211, Asn219–Ala263, and Pro280–Glu291. Over residues Ala317–Ala327 the composition is skewed to low complexity. Positions Gly351–Arg368 are enriched in gly residues. The 168-residue stretch at Pro479–Glu646 folds into the tr-type G domain. The segment at Gly488–Thr495 is G1. Residue Gly488 to Thr495 participates in GTP binding. The segment at Gly513 to His517 is G2. Residues Asp534–Gly537 form a G3 region. Residues Asp534–His538 and Thr588–Asp591 each bind GTP. A G4 region spans residues Thr588–Asp591. The interval Ser624–Lys626 is G5.

Belongs to the TRAFAC class translation factor GTPase superfamily. Classic translation factor GTPase family. IF-2 subfamily.

The protein localises to the cytoplasm. In terms of biological role, one of the essential components for the initiation of protein synthesis. Protects formylmethionyl-tRNA from spontaneous hydrolysis and promotes its binding to the 30S ribosomal subunits. Also involved in the hydrolysis of GTP during the formation of the 70S ribosomal complex. The chain is Translation initiation factor IF-2 from Cupriavidus metallidurans (strain ATCC 43123 / DSM 2839 / NBRC 102507 / CH34) (Ralstonia metallidurans).